A 201-amino-acid polypeptide reads, in one-letter code: MIELLSESLEGLSAAMIAELGRYRHQVFIEKLGWDVVSTSRVRDQEFDQFDHPQTRYIVAMSRQGICGCARLLPTTDAYLLKDVFAYLCSETPPSDPSVWELSRYAASAADDPQLAMKIFWSSLQCAWYLGASSVVAVTTTAMERYFVRNGVILQRLGPPQKVKGETLVAISFPAYQERGLEMLLRYHPEWLQGVPLSMAV.

This sequence belongs to the autoinducer synthase family.

The enzyme catalyses a fatty acyl-[ACP] + S-adenosyl-L-methionine = an N-acyl-L-homoserine lactone + S-methyl-5'-thioadenosine + holo-[ACP] + H(+). In terms of biological role, required for the synthesis of BHL (N-butanoyl-L-homoserine lactone), and HHL (N-hexanoyl-L-homoserine lactone) autoinducer molecules which bind to RhlR and thus acts in elastase biosynthesis regulation. This chain is Acyl-homoserine-lactone synthase (rhlI), found in Pseudomonas aeruginosa (strain ATCC 15692 / DSM 22644 / CIP 104116 / JCM 14847 / LMG 12228 / 1C / PRS 101 / PAO1).